We begin with the raw amino-acid sequence, 186 residues long: Ribosome-recycling factor (186 aa).

Belongs to the RRF family.

It localises to the cytoplasm. Functionally, responsible for the release of ribosomes from messenger RNA at the termination of protein biosynthesis. May increase the efficiency of translation by recycling ribosomes from one round of translation to another. The chain is Ribosome-recycling factor from Bacteroides thetaiotaomicron (strain ATCC 29148 / DSM 2079 / JCM 5827 / CCUG 10774 / NCTC 10582 / VPI-5482 / E50).